The primary structure comprises 692 residues: DNA ligase (692 aa).

Over residues Met-1–Ala-14 the composition is skewed to polar residues. Residues Met-1–Ala-27 form a disordered region. Residues Asp-54–Asp-58, Ser-103–Leu-104, and Glu-134 contribute to the NAD(+) site. Catalysis depends on Lys-136, which acts as the N6-AMP-lysine intermediate. Residues Arg-157, Glu-194, Lys-311, and Lys-335 each contribute to the NAD(+) site. Zn(2+) is bound by residues Cys-429, Cys-432, Cys-447, and Cys-454. In terms of domain architecture, BRCT spans Asn-612–Glu-692.

Belongs to the NAD-dependent DNA ligase family. LigA subfamily. Mg(2+) serves as cofactor. The cofactor is Mn(2+).

The catalysed reaction is NAD(+) + (deoxyribonucleotide)n-3'-hydroxyl + 5'-phospho-(deoxyribonucleotide)m = (deoxyribonucleotide)n+m + AMP + beta-nicotinamide D-nucleotide.. In terms of biological role, DNA ligase that catalyzes the formation of phosphodiester linkages between 5'-phosphoryl and 3'-hydroxyl groups in double-stranded DNA using NAD as a coenzyme and as the energy source for the reaction. It is essential for DNA replication and repair of damaged DNA. The polypeptide is DNA ligase (Janthinobacterium sp. (strain Marseille) (Minibacterium massiliensis)).